The primary structure comprises 609 residues: NADH-ubiquinone oxidoreductase chain 5 (609 aa).

16 consecutive transmembrane segments (helical) span residues 3–23, 46–66, 90–110, 115–135, 140–160, 174–194, 216–236, 244–264, 276–296, 304–323, 328–350, 368–388, 410–432, 460–480, 485–505, and 585–605; these read VINL…LPIV, AFMI…EMII, MIFV…SMWY, PFIN…MILV, LFQL…LIGW, AVLY…WFLI, LMGL…HPWL, TPVS…FLLI, MQTT…ICAL, IIAF…IGIN, AFLH…GSII, VLPF…GMPF, WALL…IMFF, LLLG…PTST, MPYY…ILAL, and GLIK…LMMI.

It belongs to the complex I subunit 5 family.

It is found in the mitochondrion inner membrane. It carries out the reaction a ubiquinone + NADH + 5 H(+)(in) = a ubiquinol + NAD(+) + 4 H(+)(out). Core subunit of the mitochondrial membrane respiratory chain NADH dehydrogenase (Complex I) that is believed to belong to the minimal assembly required for catalysis. Complex I functions in the transfer of electrons from NADH to the respiratory chain. The immediate electron acceptor for the enzyme is believed to be ubiquinone. The sequence is that of NADH-ubiquinone oxidoreductase chain 5 (MT-ND5) from Phoca vitulina (Harbor seal).